A 452-amino-acid polypeptide reads, in one-letter code: Cobyrinate a,c-diamide synthase (452 aa).

Residues 248 to 441 (RVAYALDAAF…LHIHFYQNPA (194 aa)) form the GATase cobBQ-type domain. Cys330 serves as the catalytic Nucleophile.

This sequence belongs to the CobB/CbiA family. It depends on Mg(2+) as a cofactor.

It carries out the reaction cob(II)yrinate + 2 L-glutamine + 2 ATP + 2 H2O = cob(II)yrinate a,c diamide + 2 L-glutamate + 2 ADP + 2 phosphate + 2 H(+). It functions in the pathway cofactor biosynthesis; adenosylcobalamin biosynthesis; cob(II)yrinate a,c-diamide from sirohydrochlorin (anaerobic route): step 10/10. Catalyzes the ATP-dependent amidation of the two carboxylate groups at positions a and c of cobyrinate, using either L-glutamine or ammonia as the nitrogen source. This Listeria innocua serovar 6a (strain ATCC BAA-680 / CLIP 11262) protein is Cobyrinate a,c-diamide synthase.